Here is a 496-residue protein sequence, read N- to C-terminus: Flotillin-like protein 3 (496 aa).

Residue Cys37 is the site of S-palmitoyl cysteine attachment. Positions 301 to 328 (VVREAELQLEVERKNALRLTEKLKAEKL) form a coiled coil.

Belongs to the band 7/mec-2 family. Flotillin subfamily. Post-translationally, may be palmitoylated.

It localises to the cell membrane. Its subcellular location is the membrane. It is found in the caveola. May act as a scaffolding protein within caveolar membranes, functionally participating in formation of caveolae or caveolae-like vesicles. This is Flotillin-like protein 3 (FLOT3) from Oryza sativa subsp. japonica (Rice).